A 417-amino-acid chain; its full sequence is Secreted aspartic protease 4 (417 aa).

The N-terminal stretch at 1–18 is a signal peptide; that stretch reads MFLQNILSVLAFALLIDA. Residues 19–75 constitute a propeptide, activation peptide; it reads APVKRSTGFVTLDFNVKRSLVDPKDPTVEVKRSPLFLDIEPTEIPVDDTGRNDVGKR. One can recognise a Peptidase A1 domain in the interval 89–403; sequence YSADITIGSN…DLDDRKISMA (315 aa). Asp107 is a catalytic residue. 107–109 contacts pepstatin A; that stretch reads DTG. Cys122 and Cys134 are disulfide-bonded. An N-linked (GlcNAc...) asparagine glycan is attached at Asn137. 160-161 serves as a coordination point for pepstatin A; sequence AD. Residue Asp267 participates in Zn(2+) binding. Residue Asp293 is part of the active site. 293–297 is a binding site for pepstatin A; it reads DSGTT. The cysteines at positions 331 and 369 are disulfide-linked.

It belongs to the peptidase A1 family. As to quaternary structure, monomer.

The protein resides in the secreted. It catalyses the reaction Preferential cleavage at the carboxyl of hydrophobic amino acids, but fails to cleave 15-Leu-|-Tyr-16, 16-Tyr-|-Leu-17 and 24-Phe-|-Phe-25 of insulin B chain. Activates trypsinogen, and degrades keratin.. Activity is inhibited by squash aspartic peptidase inhibitor (SQAPI). Functionally, secreted aspartic peptidases (SAPs) are a group of ten acidic hydrolases considered as key virulence factors. These enzymes supply the fungus with nutrient amino acids as well as are able to degrade the selected host's proteins involved in the immune defense. Moreover, acts toward human hemoglobin though limited proteolysis to generate a variety of antimicrobial hemocidins, enabling to compete with the other microorganisms of the same physiological niche using the microbicidal peptides generated from the host protein. In terms of biological role, plays a key role in defense against host by cleaving histatin-5 (Hst 5), a peptide from human saliva that carries out fungicidal activity. The cleavage rate decreases in an order of SAP2 &gt; SAP9 &gt; SAP3 &gt; SAP7 &gt; SAP4 &gt; SAP1 &gt; SAP8. The first cleavage occurs between residues 'Lys-17' and 'His-18' of Hst 5, giving DSHAKRHHGYKRKFHEK and HHSHRGY peptides. Simultaneously, the DSHAKRHHGY and KRKFHEKHHSHRGY peptides are also formed. The protein is Secreted aspartic protease 4 of Candida albicans (strain SC5314 / ATCC MYA-2876) (Yeast).